Consider the following 129-residue polypeptide: Small ribosomal subunit protein uS13 (129 aa).

Positions 92–114 (HKHNLPVRGQRTKTNARTRRGPR) are enriched in basic residues. The disordered stretch occupies residues 92–129 (HKHNLPVRGQRTKTNARTRRGPRKTVAGRGQKRGATKK).

Belongs to the universal ribosomal protein uS13 family. Part of the 30S ribosomal subunit. Forms a loose heterodimer with protein S19. Forms two bridges to the 50S subunit in the 70S ribosome.

Functionally, located at the top of the head of the 30S subunit, it contacts several helices of the 16S rRNA. In the 70S ribosome it contacts the 23S rRNA (bridge B1a) and protein L5 of the 50S subunit (bridge B1b), connecting the 2 subunits; these bridges are implicated in subunit movement. Contacts the tRNAs in the A and P-sites. The chain is Small ribosomal subunit protein uS13 from Dehalococcoides mccartyi (strain ATCC BAA-2266 / KCTC 15142 / 195) (Dehalococcoides ethenogenes (strain 195)).